The primary structure comprises 515 residues: Ribose import ATP-binding protein RbsA 1 (515 aa).

ABC transporter domains lie at 8 to 244 and 256 to 503; these read FQME…IGRE and VPAT…LNIH. 40–47 contacts ATP; the sequence is GENGAGKS.

It belongs to the ABC transporter superfamily. Ribose importer (TC 3.A.1.2.1) family. In terms of assembly, the complex is composed of an ATP-binding protein (RbsA), two transmembrane proteins (RbsC) and a solute-binding protein (RbsB).

The protein resides in the cell inner membrane. It catalyses the reaction D-ribose(out) + ATP + H2O = D-ribose(in) + ADP + phosphate + H(+). In terms of biological role, part of the ABC transporter complex RbsABC involved in ribose import. Responsible for energy coupling to the transport system. This chain is Ribose import ATP-binding protein RbsA 1, found in Mesorhizobium japonicum (strain LMG 29417 / CECT 9101 / MAFF 303099) (Mesorhizobium loti (strain MAFF 303099)).